The primary structure comprises 123 residues: Ribosome-binding factor A (123 aa).

Belongs to the RbfA family. In terms of assembly, monomer. Binds 30S ribosomal subunits, but not 50S ribosomal subunits or 70S ribosomes.

It is found in the cytoplasm. Functionally, one of several proteins that assist in the late maturation steps of the functional core of the 30S ribosomal subunit. Associates with free 30S ribosomal subunits (but not with 30S subunits that are part of 70S ribosomes or polysomes). Required for efficient processing of 16S rRNA. May interact with the 5'-terminal helix region of 16S rRNA. In Neisseria meningitidis serogroup B (strain ATCC BAA-335 / MC58), this protein is Ribosome-binding factor A.